The sequence spans 127 residues: Holo-[acyl-carrier-protein] synthase (127 aa).

2 residues coordinate Mg(2+): Asp-8 and Glu-57.

The protein belongs to the P-Pant transferase superfamily. AcpS family. Mg(2+) serves as cofactor.

The protein localises to the cytoplasm. The catalysed reaction is apo-[ACP] + CoA = holo-[ACP] + adenosine 3',5'-bisphosphate + H(+). Functionally, transfers the 4'-phosphopantetheine moiety from coenzyme A to a Ser of acyl-carrier-protein. This is Holo-[acyl-carrier-protein] synthase from Hydrogenovibrio crunogenus (strain DSM 25203 / XCL-2) (Thiomicrospira crunogena).